We begin with the raw amino-acid sequence, 510 residues long: GMP synthase [glutamine-hydrolyzing] (510 aa).

One can recognise a Glutamine amidotransferase type-1 domain in the interval 5 to 195; it reads LVLILDFGGQ…LYEVCHCQGD (191 aa). Catalysis depends on Cys82, which acts as the Nucleophile. Catalysis depends on residues His169 and Glu171. The GMPS ATP-PPase domain maps to 196–385; the sequence is WTMENYIEKE…LGVPEEIVWR (190 aa). Position 223-229 (223-229) interacts with ATP; it reads SGGVDSS.

As to quaternary structure, homodimer.

It carries out the reaction XMP + L-glutamine + ATP + H2O = GMP + L-glutamate + AMP + diphosphate + 2 H(+). It participates in purine metabolism; GMP biosynthesis; GMP from XMP (L-Gln route): step 1/1. Functionally, catalyzes the synthesis of GMP from XMP. In Alkaliphilus metalliredigens (strain QYMF), this protein is GMP synthase [glutamine-hydrolyzing].